The following is a 107-amino-acid chain: Large ribosomal subunit protein uL24 (107 aa).

Belongs to the universal ribosomal protein uL24 family. In terms of assembly, part of the 50S ribosomal subunit.

In terms of biological role, one of two assembly initiator proteins, it binds directly to the 5'-end of the 23S rRNA, where it nucleates assembly of the 50S subunit. Functionally, one of the proteins that surrounds the polypeptide exit tunnel on the outside of the subunit. This chain is Large ribosomal subunit protein uL24, found in Pelotomaculum thermopropionicum (strain DSM 13744 / JCM 10971 / SI).